The sequence spans 468 residues: Probable Xaa-Pro aminopeptidase pepP (468 aa).

The Mn(2+) site is built by Asp-264, Asp-275, Glu-398, and Glu-438.

The protein belongs to the peptidase M24B family. It depends on Mn(2+) as a cofactor.

It catalyses the reaction Release of any N-terminal amino acid, including proline, that is linked to proline, even from a dipeptide or tripeptide.. Catalyzes the removal of a penultimate prolyl residue from the N-termini of peptides. The sequence is that of Probable Xaa-Pro aminopeptidase pepP (pepP) from Talaromyces stipitatus (strain ATCC 10500 / CBS 375.48 / QM 6759 / NRRL 1006) (Penicillium stipitatum).